A 493-amino-acid polypeptide reads, in one-letter code: Putative glycerol-3-phosphate transporter 5 (493 aa).

A run of 12 helical transmembrane segments spans residues 25-44, 83-103, 113-133, 145-165, 185-205, 207-227, 292-312, 328-348, 352-372, 375-395, 428-448, and 452-472; these read FTFH…ASFH, LGEL…FAGH, FLVF…LGYW, VQIV…SVVG, SVGN…GWGW, FVLP…FLVV, FCLF…PYYL, GILS…AGFI, IKAR…ALIM, VYGS…GLLV, AIID…AGYI, and GWNS…LFLV.

This sequence belongs to the major facilitator superfamily. Organophosphate:Pi antiporter (OPA) (TC 2.A.1.4) family.

It localises to the membrane. The chain is Putative glycerol-3-phosphate transporter 5 from Arabidopsis thaliana (Mouse-ear cress).